Reading from the N-terminus, the 296-residue chain is Nucleotide-binding protein stu0831 (296 aa).

13-20 lines the ATP pocket; the sequence is GMSGAGKT. 63–66 serves as a coordination point for GTP; it reads DMRS.

It belongs to the RapZ-like family.

Functionally, displays ATPase and GTPase activities. The protein is Nucleotide-binding protein stu0831 of Streptococcus thermophilus (strain ATCC BAA-250 / LMG 18311).